The sequence spans 76 residues: Small ribosomal subunit protein bS18 (76 aa).

The protein belongs to the bacterial ribosomal protein bS18 family. Part of the 30S ribosomal subunit. Forms a tight heterodimer with protein bS6.

Functionally, binds as a heterodimer with protein bS6 to the central domain of the 16S rRNA, where it helps stabilize the platform of the 30S subunit. The protein is Small ribosomal subunit protein bS18 of Marinomonas sp. (strain MWYL1).